A 79-amino-acid polypeptide reads, in one-letter code: D-alanyl carrier protein (79 aa).

Residues 1 to 76 (MEEQVLSLLE…RVMAYVKKRV (76 aa)) enclose the Carrier domain. O-(pantetheine 4'-phosphoryl)serine is present on serine 34.

The protein belongs to the DltC family. 4'-phosphopantetheine is transferred from CoA to a specific serine of apo-DCP.

The protein resides in the cytoplasm. It functions in the pathway cell wall biogenesis; lipoteichoic acid biosynthesis. In terms of biological role, carrier protein involved in the D-alanylation of lipoteichoic acid (LTA). The loading of thioester-linked D-alanine onto DltC is catalyzed by D-alanine--D-alanyl carrier protein ligase DltA. The DltC-carried D-alanyl group is further transferred to cell membrane phosphatidylglycerol (PG) by forming an ester bond, probably catalyzed by DltD. D-alanylation of LTA plays an important role in modulating the properties of the cell wall in Gram-positive bacteria, influencing the net charge of the cell wall. The chain is D-alanyl carrier protein from Abiotrophia defectiva (Streptococcus defectivus).